A 411-amino-acid polypeptide reads, in one-letter code: Arginine deiminase (411 aa).

Catalysis depends on Cys401, which acts as the Amidino-cysteine intermediate.

Belongs to the arginine deiminase family.

It is found in the cytoplasm. It catalyses the reaction L-arginine + H2O = L-citrulline + NH4(+). It participates in amino-acid degradation; L-arginine degradation via ADI pathway; carbamoyl phosphate from L-arginine: step 1/2. This Streptococcus pyogenes serotype M49 (strain NZ131) protein is Arginine deiminase.